Reading from the N-terminus, the 446-residue chain is Exodeoxyribonuclease 7 large subunit (446 aa).

This sequence belongs to the XseA family. Heterooligomer composed of large and small subunits.

It is found in the cytoplasm. The enzyme catalyses Exonucleolytic cleavage in either 5'- to 3'- or 3'- to 5'-direction to yield nucleoside 5'-phosphates.. Functionally, bidirectionally degrades single-stranded DNA into large acid-insoluble oligonucleotides, which are then degraded further into small acid-soluble oligonucleotides. The sequence is that of Exodeoxyribonuclease 7 large subunit from Streptococcus pneumoniae (strain ATCC BAA-255 / R6).